A 343-amino-acid polypeptide reads, in one-letter code: Phosphoribosylformylglycinamidine cyclo-ligase (343 aa).

Belongs to the AIR synthase family.

The protein resides in the cytoplasm. It carries out the reaction 2-formamido-N(1)-(5-O-phospho-beta-D-ribosyl)acetamidine + ATP = 5-amino-1-(5-phospho-beta-D-ribosyl)imidazole + ADP + phosphate + H(+). It participates in purine metabolism; IMP biosynthesis via de novo pathway; 5-amino-1-(5-phospho-D-ribosyl)imidazole from N(2)-formyl-N(1)-(5-phospho-D-ribosyl)glycinamide: step 2/2. The protein is Phosphoribosylformylglycinamidine cyclo-ligase of Thermodesulfovibrio yellowstonii (strain ATCC 51303 / DSM 11347 / YP87).